Reading from the N-terminus, the 193-residue chain is Pyridoxal 5'-phosphate synthase subunit PdxT (193 aa).

Residue 52–54 coordinates L-glutamine; sequence GES. C84 functions as the Nucleophile in the catalytic mechanism. L-glutamine contacts are provided by residues R111 and 139–140; that span reads IR. Catalysis depends on charge relay system residues H176 and E178.

The protein belongs to the glutaminase PdxT/SNO family. In terms of assembly, in the presence of PdxS, forms a dodecamer of heterodimers. Only shows activity in the heterodimer.

It carries out the reaction aldehydo-D-ribose 5-phosphate + D-glyceraldehyde 3-phosphate + L-glutamine = pyridoxal 5'-phosphate + L-glutamate + phosphate + 3 H2O + H(+). It catalyses the reaction L-glutamine + H2O = L-glutamate + NH4(+). It functions in the pathway cofactor biosynthesis; pyridoxal 5'-phosphate biosynthesis. Catalyzes the hydrolysis of glutamine to glutamate and ammonia as part of the biosynthesis of pyridoxal 5'-phosphate. The resulting ammonia molecule is channeled to the active site of PdxS. The protein is Pyridoxal 5'-phosphate synthase subunit PdxT of Pasteurella multocida (strain Pm70).